Here is a 338-residue protein sequence, read N- to C-terminus: Phenylalanine--tRNA ligase alpha subunit (338 aa).

Glu253 serves as a coordination point for Mg(2+).

The protein belongs to the class-II aminoacyl-tRNA synthetase family. Phe-tRNA synthetase alpha subunit type 1 subfamily. In terms of assembly, tetramer of two alpha and two beta subunits. It depends on Mg(2+) as a cofactor.

The protein localises to the cytoplasm. The enzyme catalyses tRNA(Phe) + L-phenylalanine + ATP = L-phenylalanyl-tRNA(Phe) + AMP + diphosphate + H(+). This Geotalea uraniireducens (strain Rf4) (Geobacter uraniireducens) protein is Phenylalanine--tRNA ligase alpha subunit.